Consider the following 186-residue polypeptide: Sec-independent protein translocase protein TatB (186 aa).

A helical transmembrane segment spans residues 1 to 21 (MFDIGFSELILLMVLGLVVLG). Positions 120 to 186 (NAEKSQNAIS…SKSQSSKTKS (67 aa)) are disordered. The span at 177–186 (SKSQSSKTKS) shows a compositional bias: polar residues.

Belongs to the TatB family. The Tat system comprises two distinct complexes: a TatABC complex, containing multiple copies of TatA, TatB and TatC subunits, and a separate TatA complex, containing only TatA subunits. Substrates initially bind to the TatABC complex, which probably triggers association of the separate TatA complex to form the active translocon.

It localises to the cell inner membrane. Functionally, part of the twin-arginine translocation (Tat) system that transports large folded proteins containing a characteristic twin-arginine motif in their signal peptide across membranes. Together with TatC, TatB is part of a receptor directly interacting with Tat signal peptides. TatB may form an oligomeric binding site that transiently accommodates folded Tat precursor proteins before their translocation. The sequence is that of Sec-independent protein translocase protein TatB from Haemophilus influenzae (strain ATCC 51907 / DSM 11121 / KW20 / Rd).